Here is a 342-residue protein sequence, read N- to C-terminus: S-adenosylmethionine:tRNA ribosyltransferase-isomerase (342 aa).

Belongs to the QueA family. As to quaternary structure, monomer.

Its subcellular location is the cytoplasm. It carries out the reaction 7-aminomethyl-7-carbaguanosine(34) in tRNA + S-adenosyl-L-methionine = epoxyqueuosine(34) in tRNA + adenine + L-methionine + 2 H(+). The protein operates within tRNA modification; tRNA-queuosine biosynthesis. Its function is as follows. Transfers and isomerizes the ribose moiety from AdoMet to the 7-aminomethyl group of 7-deazaguanine (preQ1-tRNA) to give epoxyqueuosine (oQ-tRNA). The polypeptide is S-adenosylmethionine:tRNA ribosyltransferase-isomerase (Streptococcus pyogenes serotype M3 (strain ATCC BAA-595 / MGAS315)).